Here is a 701-residue protein sequence, read N- to C-terminus: Elongation factor G (701 aa).

The tr-type G domain maps to 6–285 (HKVRNIGIMA…AVVAYLPNPL (280 aa)). GTP is bound by residues 15–22 (AHIDAGKT), 79–83 (DNPGH), and 133–136 (NKMD).

Belongs to the TRAFAC class translation factor GTPase superfamily. Classic translation factor GTPase family. EF-G/EF-2 subfamily.

The protein localises to the cytoplasm. Catalyzes the GTP-dependent ribosomal translocation step during translation elongation. During this step, the ribosome changes from the pre-translocational (PRE) to the post-translocational (POST) state as the newly formed A-site-bound peptidyl-tRNA and P-site-bound deacylated tRNA move to the P and E sites, respectively. Catalyzes the coordinated movement of the two tRNA molecules, the mRNA and conformational changes in the ribosome. The protein is Elongation factor G (fusA) of Micrococcus luteus (Micrococcus lysodeikticus).